The chain runs to 309 residues: Protoheme IX farnesyltransferase (309 aa).

The next 9 helical transmembrane spans lie at 30-49, 53-75, 98-118, 123-143, 151-171, 178-198, 224-244, 247-267, and 285-305; these read VMSL…PGGV, IGFT…NMWY, AGEA…MLGL, VAAG…SMWL, IVIG…AVTG, VLMF…LALF, ILIY…TEVA, VYLI…YDIW, and VFKF…LDAI.

Belongs to the UbiA prenyltransferase family. Protoheme IX farnesyltransferase subfamily. Interacts with CtaA.

It localises to the cell inner membrane. The enzyme catalyses heme b + (2E,6E)-farnesyl diphosphate + H2O = Fe(II)-heme o + diphosphate. The protein operates within porphyrin-containing compound metabolism; heme O biosynthesis; heme O from protoheme: step 1/1. Its function is as follows. Converts heme B (protoheme IX) to heme O by substitution of the vinyl group on carbon 2 of heme B porphyrin ring with a hydroxyethyl farnesyl side group. This chain is Protoheme IX farnesyltransferase, found in Jannaschia sp. (strain CCS1).